Consider the following 381-residue polypeptide: Choline transport ATP-binding protein OpuBA (381 aa).

Residues 2-236 enclose the ABC transporter domain; it reads LTLENVSKTY…PADEFVEEFI (235 aa). An ATP-binding site is contributed by 35 to 42; it reads GPSGCGKT. CBS domains are found at residues 256–314 and 316–374; these read MNTQ…LVSE and LHED…WGEE.

Belongs to the ABC transporter superfamily.

Involved in a high affinity multicomponent binding-protein-dependent transport system for choline. Probably responsible for energy coupling to the transport system. This Bacillus subtilis (strain 168) protein is Choline transport ATP-binding protein OpuBA (opuBA).